Reading from the N-terminus, the 829-residue chain is Outer dense fiber protein 2 (829 aa).

A phosphoserine mark is found at S73 and S74. T92 carries the phosphothreonine modification. Residue S95 is modified to Phosphoserine; by TSSK4. Phosphoserine occurs at positions 106 and 109. Residue T110 is modified to Phosphothreonine. S115 and S129 each carry phosphoserine. K138 participates in a covalent cross-link: Glycyl lysine isopeptide (Lys-Gly) (interchain with G-Cter in SUMO2). Position 139 is a phosphoserine (S139). The stretch at 144 to 217 (QKGERQMAKR…MSKLVEAEMD (74 aa)) forms a coiled coil. Position 231 is a phosphothreonine (T231). Coiled coils occupy residues 245 to 423 (DINT…AEQL) and 461 to 798 (EIIV…NYVQ). Position 261 is a phosphoserine (S261). The segment at 392–413 (KQKGDRDKESLKKAIRAQKERA) is disordered. An interaction with BBOF1 region spans residues 537-701 (KNYEGMIDNY…EAIHQSQLRL (165 aa)). Residue S632 is modified to Phosphoserine.

It belongs to the ODF2 family. In terms of assembly, self-associates. Associates with microtubules and forms a fibrillar structure partially linked to the microtubule network. Interacts via its C-terminus with PLK1. Interacts with ODF1. Interacts with MARK4; the interaction is required for localization of ODF2 to centrioles. Interacts with TSSK4. Interacts with AKNA. Interacts with QRICH2. Interacts with CFAP58. Interacts with BBOF1. Interacts with CCDC38. Interacts with CCDC42. In terms of processing, tyrosine phosphorylated. Phosphorylated by TSSK4 on Ser-95. As to expression, testis-specific (at protein level). Highly expressed in cytoplasm of step 2 round spermatids. Detected in the middle piece and extends to about half the principal piece of the sperm tails.

It is found in the cytoplasm. Its subcellular location is the cytoskeleton. It localises to the microtubule organizing center. The protein resides in the centrosome. The protein localises to the cell projection. It is found in the cilium. Its subcellular location is the centriole. It localises to the spindle pole. The protein resides in the flagellum. Its function is as follows. Seems to be a major component of sperm tail outer dense fibers (ODF). ODFs are filamentous structures located on the outside of the axoneme in the midpiece and principal piece of the mammalian sperm tail and may help to maintain the passive elastic structures and elastic recoil of the sperm tail. May have a modulating influence on sperm motility. Functions as a general scaffold protein that is specifically localized at the distal/subdistal appendages of mother centrioles. Component of the centrosome matrix required for the localization of PLK1 and NIN to the centrosomes. Required for the formation and/or maintenance of normal CETN1 assembly. This chain is Outer dense fiber protein 2 (ODF2), found in Homo sapiens (Human).